We begin with the raw amino-acid sequence, 149 residues long: Putative sugar phosphate isomerase YwlF (149 aa).

Residue His9 participates in substrate binding. Catalysis depends on Cys66, which acts as the Proton acceptor. 67 to 72 (GTGIGM) is a substrate binding site. The Proton donor role is filled by His99. Arg133 serves as a coordination point for substrate.

Belongs to the LacAB/RpiB family.

This Bacillus subtilis (strain 168) protein is Putative sugar phosphate isomerase YwlF (ywlF).